Consider the following 461-residue polypeptide: Aldehyde dehydrogenase LUC3 (461 aa).

Residue 215-220 participates in NAD(+) binding; sequence GSTATG. Active-site residues include E237 and C271.

The protein belongs to the aldehyde dehydrogenase family.

It catalyses the reaction an aldehyde + NAD(+) + H2O = a carboxylate + NADH + 2 H(+). It participates in mycotoxin biosynthesis. In terms of biological role, aldehyde dehydrogenase; part of the gene cluster that mediates the biosynthesis of the mycotoxin lucilactaene and the lucilactaene-related compound NG-391 that act as cell cycle inhibitors with potent growth inhibitory activity against malarial parasites, moderate growth inhibitory activity against cancer cells, and no activity against bacteria and fungi. LUC3 is important for lucilactaene biosynthesis and performs the oxidation of the C-20 alcoholic analog prelucilactaene G into a carboxylic derivative that has still to be identified. The pathway begins with the hybrid PKS-NRPS synthetase LUC5 which is responsible for the condensation of one acetyl-coenzyme A (CoA) unit with six malonyl-CoA units and the amide linkage of the arising heptaketide and homoserine, subsequently releasing the first intermediate prelucilactaene B. Both the cytochrome P450 monooxygenase LUC2 and the hydrolase LUC6 function in parallel in modification of prelucilactaene B. LUC6 may catalyze the 2-pyrrolidone ring formation to form prelucilactaene C from prelucilactaene B, followed by C-15 hydroxylation by the same enzyme to give prelucilactaene D, which is then converted to prelucilactaene E by epoxidation, and finally to prelucilactaene F by cyclization. Prelucilactane D, prelucilactaene E, and prelucilactaene F can be converted to dihydrolucilactaene, NG391, and lucilactaene, respectively, via C-20 methyl group hydroxylation by the cytochrome P450 monooxygenase LUC2. However, LUC2, unlike FUS8 in fusarin C biosynthesis, is not enough for the full oxidation of the C-20 methyl group into carboxylic acid, which is a prerequisite for the final methylation step. The aldehyde dehydrogenase LUC3 is involved in the biosynthesis by further oxidation of the C-20 alcoholic analog prelucilactaene G into a carboxylic derivative. This unidentified carboxylic derivative may be converted to demethyllucilactaene. As the last step, the methyltransferase LUC1 methylates the hydroxyl group at C-21 of demethyllucilactaene to generate lucilactaene. The sequence is that of Aldehyde dehydrogenase LUC3 from Fusarium sp.